Here is a 201-residue protein sequence, read N- to C-terminus: Histidine biosynthesis bifunctional protein HisIE (201 aa).

The segment at 1–111 is phosphoribosyl-AMP cyclohydrolase; sequence MKINWQKVDN…EKTTQPDWIF (111 aa). Residues 112–201 are phosphoribosyl-ATP pyrophosphohydrolase; the sequence is LSKLERLIAS…IHKLKERHTK (90 aa).

In the N-terminal section; belongs to the PRA-CH family. It in the C-terminal section; belongs to the PRA-PH family.

It localises to the cytoplasm. It carries out the reaction 1-(5-phospho-beta-D-ribosyl)-ATP + H2O = 1-(5-phospho-beta-D-ribosyl)-5'-AMP + diphosphate + H(+). The enzyme catalyses 1-(5-phospho-beta-D-ribosyl)-5'-AMP + H2O = 1-(5-phospho-beta-D-ribosyl)-5-[(5-phospho-beta-D-ribosylamino)methylideneamino]imidazole-4-carboxamide. Its pathway is amino-acid biosynthesis; L-histidine biosynthesis; L-histidine from 5-phospho-alpha-D-ribose 1-diphosphate: step 2/9. It functions in the pathway amino-acid biosynthesis; L-histidine biosynthesis; L-histidine from 5-phospho-alpha-D-ribose 1-diphosphate: step 3/9. In Pasteurella multocida (strain Pm70), this protein is Histidine biosynthesis bifunctional protein HisIE (hisI).